We begin with the raw amino-acid sequence, 269 residues long: MTNLIRSNFQDHPFHLVSPSPWPLYTSVSLLNLATSAALSMHNFNNSYYLFFISLILVISSMAFWFRDIISEATLLGDHTLAVQKGLNLGVILFIVSEALFFLAIFWAFFHSSLTPTVELGSQWPPIGIEPINPFELPLLNTVILLSSGATVTYAHHSLIHGERKGALYGSIITILLAIIFTVFQGVEYNVSSFTISDGAFGTCFYFGTGFHGFHVIIGTIFLAVALWRIFAYHLTDNHHVGFEGGILYWHFVDVVWLFLYVSIYYWGS.

6 helical membrane passes run 46–66, 90–110, 138–160, 167–187, 207–227, and 247–267; these read NSYY…AFWF, GVIL…WAFF, PLLN…HSLI, ALYG…FQGV, FGTG…AVAL, and ILYW…IYYW.

Belongs to the cytochrome c oxidase subunit 3 family. In terms of assembly, component of the cytochrome c oxidase (complex IV, CIV), a multisubunit enzyme composed of a catalytic core of 3 subunits and several supernumerary subunits. The complex exists as a monomer or a dimer and forms supercomplexes (SCs) in the inner mitochondrial membrane with ubiquinol-cytochrome c oxidoreductase (cytochrome b-c1 complex, complex III, CIII).

It localises to the mitochondrion inner membrane. The catalysed reaction is 4 Fe(II)-[cytochrome c] + O2 + 8 H(+)(in) = 4 Fe(III)-[cytochrome c] + 2 H2O + 4 H(+)(out). Its function is as follows. Component of the cytochrome c oxidase, the last enzyme in the mitochondrial electron transport chain which drives oxidative phosphorylation. The respiratory chain contains 3 multisubunit complexes succinate dehydrogenase (complex II, CII), ubiquinol-cytochrome c oxidoreductase (cytochrome b-c1 complex, complex III, CIII) and cytochrome c oxidase (complex IV, CIV), that cooperate to transfer electrons derived from NADH and succinate to molecular oxygen, creating an electrochemical gradient over the inner membrane that drives transmembrane transport and the ATP synthase. Cytochrome c oxidase is the component of the respiratory chain that catalyzes the reduction of oxygen to water. Electrons originating from reduced cytochrome c in the intermembrane space (IMS) are transferred via the dinuclear copper A center (CU(A)) of subunit 2 and heme A of subunit 1 to the active site in subunit 1, a binuclear center (BNC) formed by heme A3 and copper B (CU(B)). The BNC reduces molecular oxygen to 2 water molecules using 4 electrons from cytochrome c in the IMS and 4 protons from the mitochondrial matrix. The protein is Cytochrome c oxidase subunit 3 (COIII) of Podospora anserina (strain S / ATCC MYA-4624 / DSM 980 / FGSC 10383) (Pleurage anserina).